A 253-amino-acid chain; its full sequence is Triosephosphate isomerase, cytosolic (253 aa).

Residues Asn-10 and Lys-12 each contribute to the substrate site. Residue His-96 is the Electrophile of the active site. Glu-166 functions as the Proton acceptor in the catalytic mechanism.

Belongs to the triosephosphate isomerase family. Homodimer.

The protein localises to the cytoplasm. The enzyme catalyses D-glyceraldehyde 3-phosphate = dihydroxyacetone phosphate. The protein operates within carbohydrate biosynthesis; gluconeogenesis. It functions in the pathway carbohydrate degradation; glycolysis; D-glyceraldehyde 3-phosphate from glycerone phosphate: step 1/1. The polypeptide is Triosephosphate isomerase, cytosolic (Coptis japonica (Japanese goldthread)).